The chain runs to 54 residues: UPF0391 membrane protein Tbd_2238 (54 aa).

Helical transmembrane passes span 5 to 25 (ALVFFIIAIVAAVFGFSGIAA) and 28 to 48 (VGIAKILFVVFLIMAIATFVV).

The protein belongs to the UPF0391 family.

It localises to the cell membrane. This Thiobacillus denitrificans (strain ATCC 25259 / T1) protein is UPF0391 membrane protein Tbd_2238.